A 491-amino-acid chain; its full sequence is Ketol-acid reductoisomerase (NADP(+)) (491 aa).

Residues 15 to 208 (AQLGKCRFMG…GGHRAGVLES (194 aa)) enclose the KARI N-terminal Rossmann domain. NADP(+) is bound by residues 45–48 (CGAQ), R68, R76, S78, and 108–110 (DKQ). H132 is an active-site residue. G158 provides a ligand contact to NADP(+). KARI C-terminal knotted domains are found at residues 209 to 344 (SFVA…TAPQ) and 345 to 484 (YEGK…MTDM). Positions 217, 221, 389, and 393 each coordinate Mg(2+). Residue S414 participates in substrate binding.

It belongs to the ketol-acid reductoisomerase family. It depends on Mg(2+) as a cofactor.

It catalyses the reaction (2R)-2,3-dihydroxy-3-methylbutanoate + NADP(+) = (2S)-2-acetolactate + NADPH + H(+). It carries out the reaction (2R,3R)-2,3-dihydroxy-3-methylpentanoate + NADP(+) = (S)-2-ethyl-2-hydroxy-3-oxobutanoate + NADPH + H(+). Its pathway is amino-acid biosynthesis; L-isoleucine biosynthesis; L-isoleucine from 2-oxobutanoate: step 2/4. It participates in amino-acid biosynthesis; L-valine biosynthesis; L-valine from pyruvate: step 2/4. Involved in the biosynthesis of branched-chain amino acids (BCAA). Catalyzes an alkyl-migration followed by a ketol-acid reduction of (S)-2-acetolactate (S2AL) to yield (R)-2,3-dihydroxy-isovalerate. In the isomerase reaction, S2AL is rearranged via a Mg-dependent methyl migration to produce 3-hydroxy-3-methyl-2-ketobutyrate (HMKB). In the reductase reaction, this 2-ketoacid undergoes a metal-dependent reduction by NADPH to yield (R)-2,3-dihydroxy-isovalerate. This is Ketol-acid reductoisomerase (NADP(+)) from Escherichia coli (strain UTI89 / UPEC).